Here is a 96-residue protein sequence, read N- to C-terminus: UPF0235 protein VC_0458 (96 aa).

The protein belongs to the UPF0235 family.

This chain is UPF0235 protein VC_0458, found in Vibrio cholerae serotype O1 (strain ATCC 39315 / El Tor Inaba N16961).